The chain runs to 201 residues: MINRKKSIITLCFVLMLPFASWAEAPVIDDSENFAMIDRQEEYDAPLVNPKYDNPQIESAELDGSQNDNYSTDTSQSYDEPALVKEDRSTISDNAKLIDKIQQLQKEIQELRGQLEVQAHDLKLLQQQQVAFYKDLDSRLSNSSTSAKTIQNDKPATDVSLGSNSPATLKAASPQIKRGPSTGPSNSKPQPVIAVSRANPA.

Disordered stretches follow at residues 46–80 (PLVN…SYDE) and 143–201 (SSTS…ANPA). 2 stretches are compositionally biased toward polar residues: residues 64 to 78 (GSQN…SQSY) and 143 to 167 (SSTS…NSPA).

This is an uncharacterized protein from Legionella pneumophila.